A 342-amino-acid chain; its full sequence is Phosphate acyltransferase (342 aa).

This sequence belongs to the PlsX family. In terms of assembly, homodimer. Probably interacts with PlsY.

The protein localises to the cytoplasm. The enzyme catalyses a fatty acyl-[ACP] + phosphate = an acyl phosphate + holo-[ACP]. It functions in the pathway lipid metabolism; phospholipid metabolism. In terms of biological role, catalyzes the reversible formation of acyl-phosphate (acyl-PO(4)) from acyl-[acyl-carrier-protein] (acyl-ACP). This enzyme utilizes acyl-ACP as fatty acyl donor, but not acyl-CoA. The protein is Phosphate acyltransferase of Blochmanniella pennsylvanica (strain BPEN).